Consider the following 62-residue polypeptide: Small ribosomal subunit protein eS27 (62 aa).

Zn(2+) contacts are provided by Cys-17, Cys-20, Cys-36, and Cys-39. The segment at 17 to 39 (CNDCENEQIIFGSASRKITCVVC) adopts a C4-type zinc-finger fold.

The protein belongs to the eukaryotic ribosomal protein eS27 family. As to quaternary structure, part of the 30S ribosomal subunit. Requires Zn(2+) as cofactor.

This is Small ribosomal subunit protein eS27 from Methanosarcina barkeri (strain Fusaro / DSM 804).